We begin with the raw amino-acid sequence, 386 residues long: Uroporphyrinogen decarboxylase (386 aa).

Positions 44, 46, 48, 57, 93, 170, 225, and 364 each coordinate coproporphyrinogen I. Coproporphyrinogen III is bound by residues arginine 44, alanine 46, and arginine 48. Aspartate 93, tyrosine 170, serine 225, and histidine 364 together coordinate coproporphyrinogen III.

It belongs to the uroporphyrinogen decarboxylase family. As to quaternary structure, homodimer.

It is found in the cytoplasm. The protein localises to the cytosol. It catalyses the reaction uroporphyrinogen III + 4 H(+) = coproporphyrinogen III + 4 CO2. The protein operates within porphyrin-containing compound metabolism; protoporphyrin-IX biosynthesis; coproporphyrinogen-III from 5-aminolevulinate: step 4/4. Functionally, catalyzes the decarboxylation of four acetate groups of uroporphyrinogen-III to yield coproporphyrinogen-III. In Drosophila virilis (Fruit fly), this protein is Uroporphyrinogen decarboxylase.